The sequence spans 84 residues: Cell division topological specificity factor (84 aa).

The protein belongs to the MinE family.

Prevents the cell division inhibition by proteins MinC and MinD at internal division sites while permitting inhibition at polar sites. This ensures cell division at the proper site by restricting the formation of a division septum at the midpoint of the long axis of the cell. The polypeptide is Cell division topological specificity factor (Cupriavidus taiwanensis (strain DSM 17343 / BCRC 17206 / CCUG 44338 / CIP 107171 / LMG 19424 / R1) (Ralstonia taiwanensis (strain LMG 19424))).